The chain runs to 362 residues: 2-oxoglutarate-dependent dioxygenase lolO1 (362 aa).

Residues 199–312 form the Fe2OG dioxygenase domain; that stretch reads TWNYFLGQPV…RYSLVFFGHL (114 aa). The Fe cation site is built by His-222, Asp-224, and His-280. Arg-303 provides a ligand contact to 2-oxoglutarate.

The protein belongs to the iron/ascorbate-dependent oxidoreductase family. Fe(2+) serves as cofactor.

Its pathway is alkaloid biosynthesis. In terms of biological role, 2-oxoglutarate-dependent dioxygenase; part of the gene cluster that mediates the biosynthesis of loline alkaloids, potent insecticidal agents composed of a pyrrolizidine ring system and an uncommon ether bridge linking carbons 2 and 7. Lolines are structurally differentiated by the various modifications of the L-amino group and include norloline, loline, N-methylloline, N-acetylloline, N-acetylnorloline, and N-formylloline. The first committed step is the condensation of O-acetyl-L-homoserine (derived from L-aspartic acid) and L-proline, probably catalyzed by the gamma-type pyridoxal 5'-phosphate(PLP)-dependent enzyme lolC, to give the diamino diacid, NACPP. Ensuing cyclization, decarboxylation, and acetylation steps yield 1-exo-acetamidopyrrolizidine (AcAP). LolO is required for installation of the ether bridge upon the pathway intermediate, 1-exo-acetamidopyrrolizidine (AcAP). In sequential 2-oxoglutarate- and O(2)-consuming steps, lolO removes hydrogens from C2 and C7 of AcAP to form both carbon-oxygen bonds in N-acetylnorloline (NANL), the precursor to all other lolines. The enzymes lolD, lolE, lolF and lolT have also been proposed to be involved in the ether-bridge installation. Further processing of the exocyclic moiety of NANL by fungal N-acetamidase (LolN), methyltransferase (LolM), and cytochrome P450 (LolP) enzymes, with occasional involvement of a plant acetyltransferase, generates the other known lolines. LolN transforms NANL to norlonine which is monomethylated and dimethylated to respectively lonine and N-methyllonine (NML) by lolM. LolP catalyzes hydroxylation of the methyl group in N-methylloline (NML) and further oxygenation to N-formylloline (NFL). A plant acetyltransferase is responsible for the acetylation of loline to form N-acetylloline (NAL). LolA might interact with aspartate kinase to prevent feedback inhibition of its activity by these end products and thereby promote production of l-homoserine from l-aspartate. The chain is 2-oxoglutarate-dependent dioxygenase lolO1 from Epichloe uncinata (Endophyte fungus).